A 413-amino-acid polypeptide reads, in one-letter code: Serine hydroxymethyltransferase (413 aa).

(6S)-5,6,7,8-tetrahydrofolate-binding positions include Leu119 and 123 to 125; that span reads GHL. Lys228 is modified (N6-(pyridoxal phosphate)lysine). 351–353 lines the (6S)-5,6,7,8-tetrahydrofolate pocket; that stretch reads SPF.

It belongs to the SHMT family. In terms of assembly, homodimer. The cofactor is pyridoxal 5'-phosphate.

Its subcellular location is the cytoplasm. It carries out the reaction (6R)-5,10-methylene-5,6,7,8-tetrahydrofolate + glycine + H2O = (6S)-5,6,7,8-tetrahydrofolate + L-serine. It participates in one-carbon metabolism; tetrahydrofolate interconversion. Its pathway is amino-acid biosynthesis; glycine biosynthesis; glycine from L-serine: step 1/1. Catalyzes the reversible interconversion of serine and glycine with tetrahydrofolate (THF) serving as the one-carbon carrier. This reaction serves as the major source of one-carbon groups required for the biosynthesis of purines, thymidylate, methionine, and other important biomolecules. Also exhibits THF-independent aldolase activity toward beta-hydroxyamino acids, producing glycine and aldehydes, via a retro-aldol mechanism. In Clostridium botulinum (strain Okra / Type B1), this protein is Serine hydroxymethyltransferase.